The chain runs to 246 residues: UDP-N-acetyl-D-mannosaminuronic acid transferase (246 aa).

Belongs to the glycosyltransferase 26 family.

It carries out the reaction UDP-N-acetyl-alpha-D-mannosaminouronate + N-acetyl-alpha-D-glucosaminyl-di-trans,octa-cis-undecaprenyl diphosphate = beta-D-ManNAcA-(1-&gt;4)-alpha-D-GlcNAc-di-trans,octa-cis-undecaprenyl diphosphate + UDP + H(+). It participates in bacterial outer membrane biogenesis; enterobacterial common antigen biosynthesis. Its function is as follows. Catalyzes the synthesis of Und-PP-GlcNAc-ManNAcA (Lipid II), the second lipid-linked intermediate involved in enterobacterial common antigen (ECA) synthesis. This is UDP-N-acetyl-D-mannosaminuronic acid transferase from Escherichia coli (strain ATCC 8739 / DSM 1576 / NBRC 3972 / NCIMB 8545 / WDCM 00012 / Crooks).